The chain runs to 264 residues: uncharacterized protein (264 aa).

The first 22 residues, 1-22 (MGYLKKLALFISVIILGIFIIG), serve as a signal peptide directing secretion. The N-palmitoyl cysteine moiety is linked to residue cysteine 23. A lipid anchor (S-diacylglycerol cysteine) is attached at cysteine 23.

The protein belongs to the staphylococcal tandem lipoprotein family.

Its subcellular location is the cell membrane. This is an uncharacterized protein from Staphylococcus aureus (strain N315).